Here is a 468-residue protein sequence, read N- to C-terminus: ATP synthase subunit beta 2 (468 aa).

155–162 (GGAGVGKT) lines the ATP pocket.

This sequence belongs to the ATPase alpha/beta chains family. F-type ATPases have 2 components, CF(1) - the catalytic core - and CF(0) - the membrane proton channel. CF(1) has five subunits: alpha(3), beta(3), gamma(1), delta(1), epsilon(1). CF(0) has four main subunits: a(1), b(1), b'(1) and c(9-12).

It localises to the cell inner membrane. It catalyses the reaction ATP + H2O + 4 H(+)(in) = ADP + phosphate + 5 H(+)(out). Its function is as follows. Produces ATP from ADP in the presence of a proton gradient across the membrane. The catalytic sites are hosted primarily by the beta subunits. In Chlorobium luteolum (strain DSM 273 / BCRC 81028 / 2530) (Pelodictyon luteolum), this protein is ATP synthase subunit beta 2.